The chain runs to 243 residues: GTP cyclohydrolase 1 type 2 (243 aa).

Positions 63, 64, 102, 209, and 213 each coordinate a divalent metal cation.

The protein belongs to the GTP cyclohydrolase I type 2/NIF3 family. In terms of assembly, homohexamer.

It catalyses the reaction GTP + H2O = 7,8-dihydroneopterin 3'-triphosphate + formate + H(+). Its pathway is cofactor biosynthesis; 7,8-dihydroneopterin triphosphate biosynthesis; 7,8-dihydroneopterin triphosphate from GTP: step 1/1. Its function is as follows. Converts GTP to dihydroneopterin triphosphate. Is not active with GDP, GMP, ATP, CTP or UTP as substrate. This Helicobacter pylori (strain ATCC 700392 / 26695) (Campylobacter pylori) protein is GTP cyclohydrolase 1 type 2.